A 361-amino-acid polypeptide reads, in one-letter code: Probable dual-specificity RNA methyltransferase RlmN (361 aa).

Catalysis depends on Glu-91, which acts as the Proton acceptor. The region spanning 97 to 329 (QHYGLSVCVT…KKKGVNCVVR (233 aa)) is the Radical SAM core domain. Cysteines 104 and 340 form a disulfide. Residues Cys-111, Cys-115, and Cys-118 each contribute to the [4Fe-4S] cluster site. S-adenosyl-L-methionine is bound by residues 163 to 164 (GE), Ser-195, 218 to 220 (SLH), and Asn-296. The S-methylcysteine intermediate role is filled by Cys-340.

The protein belongs to the radical SAM superfamily. RlmN family. [4Fe-4S] cluster serves as cofactor.

It is found in the cytoplasm. It carries out the reaction adenosine(2503) in 23S rRNA + 2 reduced [2Fe-2S]-[ferredoxin] + 2 S-adenosyl-L-methionine = 2-methyladenosine(2503) in 23S rRNA + 5'-deoxyadenosine + L-methionine + 2 oxidized [2Fe-2S]-[ferredoxin] + S-adenosyl-L-homocysteine. The enzyme catalyses adenosine(37) in tRNA + 2 reduced [2Fe-2S]-[ferredoxin] + 2 S-adenosyl-L-methionine = 2-methyladenosine(37) in tRNA + 5'-deoxyadenosine + L-methionine + 2 oxidized [2Fe-2S]-[ferredoxin] + S-adenosyl-L-homocysteine. Functionally, specifically methylates position 2 of adenine 2503 in 23S rRNA and position 2 of adenine 37 in tRNAs. The protein is Probable dual-specificity RNA methyltransferase RlmN of Streptococcus pneumoniae serotype 19F (strain G54).